Reading from the N-terminus, the 540-residue chain is Cytokinin dehydrogenase 5 (540 aa).

Residues 1 to 22 form the signal peptide; the sequence is MNREMTSSFLLLTFAICKLIIA. The 179-residue stretch at 63 to 241 folds into the FAD-binding PCMH-type domain; that stretch reads SPEEPLAVLH…TRARISLEPA (179 aa). Positions 97, 99, and 101 each coordinate FAD. H102 is subject to Pros-8alpha-FAD histidine. 7 residues coordinate FAD: S103, Q107, D165, T170, S176, I180, and I231. N-linked (GlcNAc...) asparagine glycosylation is found at N310 and N406. Positions 479 and 517 each coordinate FAD.

It belongs to the oxygen-dependent FAD-linked oxidoreductase family. FAD is required as a cofactor. Expressed in the developing leaf petioles and in the rib zone of the axillary shoot meristems. In roots, expressed in the vascular cylinder within the root apical meristem and only faintly detectable in the differentiated root.

It localises to the secreted. It is found in the extracellular space. It carries out the reaction N(6)-dimethylallyladenine + A + H2O = 3-methyl-2-butenal + adenine + AH2. Catalyzes the oxidation of cytokinins, a family of N(6)-substituted adenine derivatives that are plant hormones, where the substituent is an isopentenyl group. In association with CKX3 regulates the activity of the reproductive meristems, flower organ size and ovule formation. This Arabidopsis thaliana (Mouse-ear cress) protein is Cytokinin dehydrogenase 5 (CKX5).